The sequence spans 85 residues: Small ribosomal subunit protein bS16c (85 aa).

Belongs to the bacterial ribosomal protein bS16 family.

The protein resides in the plastid. It localises to the chloroplast. The chain is Small ribosomal subunit protein bS16c from Oryza nivara (Indian wild rice).